Reading from the N-terminus, the 1469-residue chain is uncharacterized protein (1469 aa).

A compositionally biased stretch (basic and acidic residues) spans 146 to 180 (GDHITPKEEEEKEKEKEKEKEKEKEKEKEKEKDSE). Disordered stretches follow at residues 146–186 (GDHI…LQEQ), 231–255 (IQNN…DNNN), 306–344 (TTTT…GGDS), 430–455 (LNFN…PYHY), 520–560 (PVKN…NNNS), 654–706 (TTTT…PLVR), 719–755 (RTQT…VKNQ), 881–958 (YNNI…NIIN), and 1329–1369 (NCSS…NSSN). 5 stretches are compositionally biased toward low complexity: residues 232–241 (QNNQNNQNNN), 306–327 (TTTT…ISNT), 430–449 (LNFN…NNNN), 523–559 (NNNN…INNN), and 654–693 (TTTT…TTTP). Over residues 719–731 (RTQTQLQTKIQPK) the composition is skewed to polar residues. Residues 732–749 (SPQPQPTAAPEPQKPPTP) show a composition bias toward pro residues. 2 stretches are compositionally biased toward low complexity: residues 1329–1347 (NCSS…SGSE) and 1354–1369 (RSNT…NSSN).

This is an uncharacterized protein from Dictyostelium discoideum (Social amoeba).